The sequence spans 780 residues: Aconitate hydratase, mitochondrial (780 aa).

The N-terminal 27 residues, 1-27 (MAPYSLLVTRLQKALGVRQYHVASVLC), are a transit peptide targeting the mitochondrion. The residue at position 31 (Lys31) is an N6-succinyllysine. Position 50 is an N6-acetyllysine; alternate (Lys50). Lys50 is modified (N6-succinyllysine; alternate). Residue Gln99 coordinates substrate. 2 positions are modified to N6-acetyllysine; alternate: Lys138 and Lys144. Residues Lys138 and Lys144 each carry the N6-succinyllysine; alternate modification. Position 192–194 (192–194 (DSH)) interacts with substrate. An N6-acetyllysine; alternate modification is found at Lys233. Residue Lys233 is modified to N6-succinyllysine; alternate. A [4Fe-4S] cluster-binding site is contributed by Cys385. Position 411 is an N6-succinyllysine (Lys411). Positions 448 and 451 each coordinate [4Fe-4S] cluster. The substrate site is built by Arg474 and Arg479. Basic and acidic residues predominate over residues 528-537 (DADELPKGEF). Residues 528-560 (DADELPKGEFDPGQDTYQHPPKDSSGQHVDVSP) form a disordered region. Lys549 is subject to N6-succinyllysine. Over residues 551-560 (SSGQHVDVSP) the composition is skewed to polar residues. Phosphoserine is present on Ser559. Lys573 bears the N6-acetyllysine; alternate mark. N6-succinyllysine; alternate is present on Lys573. Lys577 and Lys591 each carry N6-succinyllysine. Lys605 is subject to N6-acetyllysine; alternate. Lys605 is modified (N6-succinyllysine; alternate). Arg607 is a binding site for substrate. An N6-succinyllysine modification is found at Lys628. Ser670 carries the phosphoserine modification. Residue 670–671 (SR) coordinates substrate. N6-succinyllysine is present on Lys689. 2 positions are modified to N6-acetyllysine; alternate: Lys723 and Lys730. Residues Lys723 and Lys730 each carry the N6-succinyllysine; alternate modification. N6-acetyllysine occurs at positions 736, 739, and 743.

It belongs to the aconitase/IPM isomerase family. In terms of assembly, monomer. [4Fe-4S] cluster is required as a cofactor. In terms of processing, forms covalent cross-links mediated by transglutaminase TGM2, between a glutamine and the epsilon-amino group of a lysine residue, forming homopolymers and heteropolymers.

Its subcellular location is the mitochondrion. The catalysed reaction is citrate = D-threo-isocitrate. It functions in the pathway carbohydrate metabolism; tricarboxylic acid cycle; isocitrate from oxaloacetate: step 2/2. Functionally, catalyzes the isomerization of citrate to isocitrate via cis-aconitate. The protein is Aconitate hydratase, mitochondrial (ACO2) of Homo sapiens (Human).